A 916-amino-acid chain; its full sequence is Neurofilament medium polypeptide (916 aa).

Residues 1 to 10 (MSYTLDSLGN) are compositionally biased toward polar residues. Residues 1 to 51 (MSYTLDSLGNPSAYRRVTETRSSFSRVSGSPSSGFRSQSWSRGSPSTVSSS) are disordered. An N-acetylserine modification is found at Ser-2. The segment at 2–104 (SYTLDSLGNP…KLSRSNEKEQ (103 aa)) is head. Residues 21 to 44 (RSSFSRVSGSPSSGFRSQSWSRGS) are compositionally biased toward low complexity. Ser-30 carries the phosphoserine modification. Arg-42 carries the post-translational modification Omega-N-methylarginine. The O-linked (GlcNAc) threonine glycan is linked to Thr-47. A Phosphoserine modification is found at Ser-99. The IF rod domain maps to 101–412 (EKEQLQGLND…KLLEGEETRF (312 aa)). The coil 1A stretch occupies residues 105–136 (LQGLNDRFAGYIEKVHYLEQQNKEIEAEIQAL). The tract at residues 137-149 (RQKQASHAQLGDA) is linker 1. The tract at residues 150-248 (YDQEIRELRA…EEEVADLLAQ (99 aa)) is coil 1B. Ser-226 carries the phosphoserine modification. The tract at residues 249 to 265 (IQASHITVERKDYLKTD) is linker 12. The interval 266-287 (ISTALKEIRSQLESHSDQNMHQ) is coil 2A. The linker 2 stretch occupies residues 288-291 (AEEW). The coil 2B stretch occupies residues 292–412 (FKCRYAKLTE…KLLEGEETRF (121 aa)). Tyr-320 carries the post-translational modification Phosphotyrosine. Phosphoserine occurs at positions 346 and 418. The interval 413-916 (STFAGSITGP…AIVKEVTQSD (504 aa)) is tail. Thr-431 carries an O-linked (GlcNAc) threonine glycan. Phosphoserine occurs at positions 467 and 483. The tract at residues 485 to 851 (KEEKKEAAEE…KKGGDKSEEK (367 aa)) is disordered. The span at 493-505 (EEKEEEPEAEEEE) shows a compositional bias: acidic residues. Ser-511 carries the post-translational modification Phosphoserine. The span at 521-541 (KEEEGEKEEEEGQEEEEEEDE) shows a compositional bias: acidic residues. Over residues 542 to 561 (GAKSDQAEEGGSEKEGSSEK) the composition is skewed to basic and acidic residues. Phosphoserine is present on residues Ser-545, Ser-553, Ser-558, and Ser-559. The span at 562 to 582 (EEGEQEEGETEAEAEGEEAEA) shows a compositional bias: acidic residues. Thr-571 is modified (phosphothreonine). The segment covering 583-614 (KEEKKVEEKSEEVATKEELVADAKVEKPEKAK) has biased composition (basic and acidic residues). Tandem repeats lie at residues 614–626 (KSPV…EEKG), 627–639 (KSPV…EEKG), 640–652 (KSPV…EEKG), 653–665 (KSPV…EEKG), 666–678 (KSPV…EEKA), and 679–691 (KSPV…EEAK). Positions 614 to 691 (KSPVPKSPVE…VPKSPVEEAK (78 aa)) are 6 X 13 AA approximate tandem repeats of K-S-P-V-[PS]-K-S-P-V-E-E-[KA]-[GAK]. Ser-641 and Ser-646 each carry phosphoserine. Ser-680 and Ser-685 each carry phosphoserine. Basic and acidic residues-rich tracts occupy residues 686–701 (PVEE…KGEQ), 707–742 (KEVK…KEEA), and 755–778 (VHLE…EKAG). Position 736 is a phosphoserine (Ser-736). Phosphoserine occurs at positions 783, 821, and 837. Residues 788 to 828 (SDKGAKGSRKEDIAVNGEVEGKEEVEQETKEKGSGREEEKG) show a composition bias toward basic and acidic residues. The span at 839–851 (ADEKKGGDKSEEK) shows a compositional bias: basic and acidic residues.

It belongs to the intermediate filament family. As to quaternary structure, forms heterodimers with NEFL; which can further hetero-oligomerize (in vitro). Forms heterodimers with INA (in vitro). In terms of processing, there are a number of repeats of the tripeptide K-S-P, NFM is phosphorylated on a number of the serines in this motif. It is thought that phosphorylation of NFM results in the formation of interfilament cross bridges that are important in the maintenance of axonal caliber. Post-translationally, phosphorylation seems to play a major role in the functioning of the larger neurofilament polypeptides (NF-M and NF-H), the levels of phosphorylation being altered developmentally and coincidentally with a change in the neurofilament function. Phosphorylated in the head and rod regions by the PKC kinase PKN1, leading to the inhibition of polymerization.

The protein resides in the cytoplasm. Its subcellular location is the cytoskeleton. It localises to the cell projection. The protein localises to the axon. Functionally, neurofilaments usually contain three intermediate filament proteins: NEFL, NEFM, and NEFH which are involved in the maintenance of neuronal caliber. May additionally cooperate with the neuronal intermediate filament proteins PRPH and INA to form neuronal filamentous networks. The protein is Neurofilament medium polypeptide (NEFM) of Homo sapiens (Human).